Reading from the N-terminus, the 917-residue chain is Low-density lipoprotein receptor-related protein 8 (917 aa).

Positions 1 to 24 (MCRPALARLLLLQLLLLKLYLGKG) are cleaved as a signal peptide. Over 25–838 (AMKECDKDQF…GQGFDSTVTA (814 aa)) the chain is Extracellular. LDL-receptor class A domains are found at residues 28–64 (ECDKDQFQCRNERCIPAVWACDEDNDCSDNSDEADCP), 67–105 (TCAETDFACDNGHCIPDRWKCDGEEECSDGSDESEAACT), 108–146 (VCPAEKISCGDLSNKCIPSSWRCDGQKDCESGIDEAGCA), 148–184 (ACSPDEFQCSNKTCISINFVCDGYNNCGDGSDEKKCS), and 187–225 (TCSPNEFQCNNSVCIPQLWVCDNQADCEDHSDESIERCG). 29 disulfides stabilise this stretch: Cys-29–Cys-41, Cys-36–Cys-54, Cys-48–Cys-63, Cys-68–Cys-80, Cys-75–Cys-93, Cys-87–Cys-104, Cys-109–Cys-123, Cys-116–Cys-136, Cys-130–Cys-145, Cys-149–Cys-161, Cys-156–Cys-174, Cys-168–Cys-183, Cys-188–Cys-200, Cys-195–Cys-213, Cys-207–Cys-224, Cys-241–Cys-259, Cys-253–Cys-268, Cys-273–Cys-285, Cys-280–Cys-298, Cys-292–Cys-307, Cys-313–Cys-326, Cys-321–Cys-339, Cys-333–Cys-350, Cys-355–Cys-366, Cys-362–Cys-375, Cys-377–Cys-389, Cys-395–Cys-405, Cys-401–Cys-414, and Cys-416–Cys-429. The Ca(2+) site is built by Trp-46, Asp-49, Asp-51, Asp-53, Asp-59, and Glu-60. N-linked (GlcNAc...) asparagine glycosylation is present at Asn-158. Asn-196 carries N-linked (GlcNAc...) asparagine glycosylation. LDL-receptor class A domains lie at 272–308 (TCRPDEFQCGDGTCIHGAKQCDKVHDCPDNSDEAGCV) and 312–351 (ACESPSKFQCKSGECIDGGKVCDLHRDCRDWSDEPLKECG). In terms of domain architecture, EGF-like 1 spans 346–390 (PLKECGINECSLNNGGCSHICKDLKIGYECECPPGYKLLDKKTCG). One can recognise an EGF-like 2; calcium-binding domain in the interval 391-430 (DIDECENPDACSQICINYKGDYKCECYEGYEMDTLSKNCK). 5 LDL-receptor class B repeats span residues 476 to 522 (NRIY…DWVH), 523 to 565 (KNIY…DPTR), 566 to 609 (RFMY…DLLN), 610 to 652 (QRLY…AVFE), and 653 to 695 (DRVF…FHEL). A glycan (N-linked (GlcNAc...) asparagine) is linked at Asn-532. Asn-628 carries N-linked (GlcNAc...) asparagine glycosylation. The clustered O-linked oligosaccharides stretch occupies residues 754–813 (TTPATVEVPTTTTSHPAATSTVTVTGSANTTTAVIPRAVSEATTAIPSSHSTTSLLIDSE). Residues Asn-782 and Asn-820 are each glycosylated (N-linked (GlcNAc...) asparagine). A helical transmembrane segment spans residues 839-861 (AVIGIVIPVVVIGLLCMGGYLIW). Over 862–917 (RNWKRKNTKSMNFDNPVYRKTTEEEDEDEIHIGRTAQIGHVYPARVALSLEDDGLP) the chain is Cytoplasmic.

Belongs to the LDLR family. As to quaternary structure, homooligomer. As to expression, mainly in brain.

It is found in the cell membrane. Functionally, cell surface receptor for Reelin (RELN) and apolipoprotein E (apoE)-containing ligands. Also binds alpha2-macroglobulin. LRP8 participates in transmitting the extracellular Reelin signal to intracellular signaling processes, by binding to DAB1 on its cytoplasmic tail. Reelin acts via both the VLDL receptor (VLDLR) and LRP8 to regulate DAB1 tyrosine phosphorylation and microtubule function in neurons. LRP8 has higher affinity for Reelin than VLDLR. LRP8 is thus a key component of the Reelin pathway which governs neuronal layering of the forebrain during embryonic brain development. Not required for endocytic uptake of SEPP1 in the kidney which is mediated by LRP2. This is Low-density lipoprotein receptor-related protein 8 (LRP8) from Gallus gallus (Chicken).